A 133-amino-acid polypeptide reads, in one-letter code: Core atranone cluster (CAC) protein 11 (133 aa).

It functions in the pathway mycotoxin biosynthesis. In terms of biological role, part of the core atranone cluster (CAC) which products are predicted to catalyze most or all steps of mycotoxin atranone synthesis, starting from geranylgeranyl pyrophosphate (GGPP). The initial cyclization of GGPP to dolabellane is probably performed by the terpene cyclase ATR13. The Baeyer-Villiger oxidation near the end of the atranone synthesis, which converts atranones D and E to atranones F and G is predicted to be catalyzed by the monooxygenase ATR8. Of the CAC's other predicted gene products, the reducing PKS ATR6 might synthesize a polyketide chain. This polyketide is probably transferred onto the atranone backbone by the polyketide transferase ATR5. Other predicted CAC products include 4 oxygenases (ATR2, ATR3, ATR4, and ATR14), 3 short-chain reductases (ATR7, ATR9, and ATR10), and a methyltransferase (ATR12). These may all be involved in the various steps of atranone biosynthesis, although their specific roles must await experimental determination. The polypeptide is Core atranone cluster (CAC) protein 11 (Stachybotrys chlorohalonatus (strain IBT 40285)).